The primary structure comprises 374 residues: DNA-directed RNA polymerase subunit alpha (374 aa).

The segment at 1 to 270 (MIFDEDSSSV…DQFQQFINFD (270 aa)) is alpha N-terminal domain (alpha-NTD). An alpha C-terminal domain (alpha-CTD) region spans residues 282 to 374 (KDVLPYDSNL…ESLSKQYSEE (93 aa)).

The protein belongs to the RNA polymerase alpha chain family. Homodimer. The RNAP catalytic core consists of 2 alpha, 1 beta, 1 beta' and 1 omega subunit. When a sigma factor is associated with the core the holoenzyme is formed, which can initiate transcription.

It carries out the reaction RNA(n) + a ribonucleoside 5'-triphosphate = RNA(n+1) + diphosphate. Its function is as follows. DNA-dependent RNA polymerase catalyzes the transcription of DNA into RNA using the four ribonucleoside triphosphates as substrates. This Ehrlichia ruminantium (strain Gardel) protein is DNA-directed RNA polymerase subunit alpha.